Here is a 349-residue protein sequence, read N- to C-terminus: DNA replication and repair protein RecF (349 aa).

30–37 (GKNGSGKT) provides a ligand contact to ATP.

The protein belongs to the RecF family.

Its subcellular location is the cytoplasm. Functionally, the RecF protein is involved in DNA metabolism; it is required for DNA replication and normal SOS inducibility. RecF binds preferentially to single-stranded, linear DNA. It also seems to bind ATP. The protein is DNA replication and repair protein RecF of Francisella tularensis subsp. holarctica (strain FTNF002-00 / FTA).